Reading from the N-terminus, the 247-residue chain is Orotidine 5'-phosphate decarboxylase (247 aa).

Substrate is bound by residues Asp-22, Lys-44, 71 to 80 (DLKFHDIPNT), Thr-131, Arg-192, Gln-201, Gly-221, and Arg-222. Lys-73 functions as the Proton donor in the catalytic mechanism.

The protein belongs to the OMP decarboxylase family. Type 1 subfamily. As to quaternary structure, homodimer.

It carries out the reaction orotidine 5'-phosphate + H(+) = UMP + CO2. It participates in pyrimidine metabolism; UMP biosynthesis via de novo pathway; UMP from orotate: step 2/2. In terms of biological role, catalyzes the decarboxylation of orotidine 5'-monophosphate (OMP) to uridine 5'-monophosphate (UMP). In Pectobacterium atrosepticum (strain SCRI 1043 / ATCC BAA-672) (Erwinia carotovora subsp. atroseptica), this protein is Orotidine 5'-phosphate decarboxylase.